Here is a 284-residue protein sequence, read N- to C-terminus: ELMO domain-containing protein B (284 aa).

Positions 124–276 (EHEASLERLW…EFETKISQNS (153 aa)) constitute an ELMO domain.

This Dictyostelium discoideum (Social amoeba) protein is ELMO domain-containing protein B (elmoB).